A 133-amino-acid polypeptide reads, in one-letter code: uncharacterized protein (133 aa).

A helical transmembrane segment spans residues 91–113 (LFATALISCIPSSFSALSFLATL).

It is found in the membrane. This is an uncharacterized protein from Saccharomyces cerevisiae (strain ATCC 204508 / S288c) (Baker's yeast).